Reading from the N-terminus, the 742-residue chain is MDKDNSVQEKGLFLSSWKLDNSKMAELFMECEEEELEPWQQKVEESQSKDDDDELIFVGEISSSKPAISNILNRCSPGSSSKGLKNGSFNPAISNIFKPTSQHYRNPSSNALVALPSFHPALKSSESSDGQTVSKLDFTKTSPQEDSGACSVSQSDSTQDIPSSNILQPRTGVDQTLGLKHPSTSKVNSVNPKKPKTSASISETRPCSSSSSQTAPSGASSQTVLSNVNTSSVQSAPGSSSLRSCPKCNVKFRLLDPLKCHMKRCCPDMINKFLETLKSENSKAVSKATTDSDKEKLIMLVSDFYYGRHEGTIEESQKTHTTFKCFSCTKVLKNNIRFMNHMKHHLELEKQNNETWESHTTCQHCYRQYPNPFQLQCHIESTHTPHDFSTICKICELSFETEHMLLQHMKDTHKPGEMPYICQVCQFRSSIFSDVETHFRSSHENTKNLLCPFCLKVSRMATPYMNHYMRHQKKGIYRCPKCRLQFLTSKEKTEHKLEHRTFIKPKELEGLPPGTKVIIRASLGSSQSRASSPPSSTIPSTSLQLSVPKSKSTTTKNNSKVSANKATTTSPQTVATTTGKPSASKPGTGTTKSKAKPSYKQKRQRTRKNKFSIDLKNLRCHQGSHMCIECRSKIKDFSSHFSTHINCDFCKYTTNCNKAFTNHMSSHNDHPSKQLYIFKKQSRARRGITLVCLKCDFLADTSGLDRMAKHLNQRKTHTCQVVIENVTERAVTSESASDGLFK.

Residues lysine 10, lysine 23, lysine 42, lysine 65, lysine 85, lysine 123, and lysine 135 each participate in a glycyl lysine isopeptide (Lys-Gly) (interchain with G-Cter in SUMO2) cross-link. Residues 138 to 168 (FTKTSPQEDSGACSVSQSDSTQDIPSSNILQ) are compositionally biased toward polar residues. The segment at 138–243 (FTKTSPQEDS…QSAPGSSSLR (106 aa)) is disordered. Glycyl lysine isopeptide (Lys-Gly) (interchain with G-Cter in SUMO2) cross-links involve residues lysine 180, lysine 186, and lysine 193. The span at 182-191 (PSTSKVNSVN) shows a compositional bias: polar residues. The span at 200–222 (SISETRPCSSSSSQTAPSGASSQ) shows a compositional bias: low complexity. Residues 223-243 (TVLSNVNTSSVQSAPGSSSLR) are compositionally biased toward polar residues. 5 C2H2-type zinc fingers span residues 323–345 (FKCF…MKHH), 360–383 (TTCQ…ESTH), 390–413 (TICK…KDTH), 420–443 (YICQ…RSSH), and 477–499 (YRCP…KLEH). The segment covering 523–578 (LGSSQSRASSPPSSTIPSTSLQLSVPKSKSTTTKNNSKVSANKATTTSPQTVATTT) has biased composition (low complexity). Positions 523 to 608 (LGSSQSRASS…YKQKRQRTRK (86 aa)) are disordered. A compositionally biased stretch (polar residues) spans 579-592 (GKPSASKPGTGTTK). Lysine 580 participates in a covalent cross-link: Glycyl lysine isopeptide (Lys-Gly) (interchain with G-Cter in SUMO2). Residues 593-608 (SKAKPSYKQKRQRTRK) are compositionally biased toward basic residues.

It is found in the nucleus. Functionally, may function as a transcription factor. The chain is Zinc finger protein 280C (Znf280c) from Mus musculus (Mouse).